Reading from the N-terminus, the 448-residue chain is Iroquois-class homeodomain protein irx-3 (448 aa).

Residues 108–170 (DPSRPKNATR…NARRRLKKEN (63 aa)) constitute a DNA-binding region (homeobox; TALE-type). Disordered stretches follow at residues 171–250 (KMTW…NAPE) and 387–410 (SGTA…DRSS). Residues 195-222 (KHEDDEEIDLENIDTEDIESKEDLDDPD) are compositionally biased toward acidic residues. Positions 223-237 (TDIHSDSKTDARSDS) are enriched in basic and acidic residues. Over residues 238–248 (EASDGFEDLNA) the composition is skewed to acidic residues. A compositionally biased stretch (basic and acidic residues) spans 396–406 (AEPKHSTDSLT).

The protein belongs to the TALE/IRO homeobox family. Expressed in the neural plate in overlapping patterns with other irx members, which all share an anterior border of expression. Outside the nervous system and at tailbud stages, expressed in the developing otic vesicle, branchial arches, prospective heart region and pronephros.

The protein localises to the nucleus. Acts partially redundantly with other irx members in neural patterning. Required for formation of the posterior forebrain, midbrain, hindbrain, and to a lesser extent, spinal cord. Both up-regulates and down-regulates gene expression during neural development. Acts early in neural plate development to induce proneural gene expression and specify a neural precursor state. Also up-regulates repressors that prevent neuronal differentiation. Required during at least two stages of pronephros kidney development; during neurula stages, maintains transcription of key renal genes to define the size and identity of the pronephric anlage, probably in part through regulation of bmp-signaling. Subsequently required for proper formation of the intermediate tubule segment of the pronephros. This chain is Iroquois-class homeodomain protein irx-3, found in Xenopus tropicalis (Western clawed frog).